The chain runs to 308 residues: Aspartate carbamoyltransferase catalytic subunit (308 aa).

2 residues coordinate carbamoyl phosphate: R55 and T56. Residue K85 participates in L-aspartate binding. R106, H135, and Q138 together coordinate carbamoyl phosphate. 2 residues coordinate L-aspartate: R168 and R229. Carbamoyl phosphate-binding residues include L267 and P268.

It belongs to the aspartate/ornithine carbamoyltransferase superfamily. ATCase family. In terms of assembly, heterododecamer (2C3:3R2) of six catalytic PyrB chains organized as two trimers (C3), and six regulatory PyrI chains organized as three dimers (R2).

The enzyme catalyses carbamoyl phosphate + L-aspartate = N-carbamoyl-L-aspartate + phosphate + H(+). The protein operates within pyrimidine metabolism; UMP biosynthesis via de novo pathway; (S)-dihydroorotate from bicarbonate: step 2/3. Its function is as follows. Catalyzes the condensation of carbamoyl phosphate and aspartate to form carbamoyl aspartate and inorganic phosphate, the committed step in the de novo pyrimidine nucleotide biosynthesis pathway. The chain is Aspartate carbamoyltransferase catalytic subunit from Laribacter hongkongensis (strain HLHK9).